Here is a 425-residue protein sequence, read N- to C-terminus: uncharacterized protein (425 aa).

One can recognise an HD domain in the interval 55–181 (RYAHSLGVYE…DLDTDRMDYL (127 aa)).

This is an uncharacterized protein from Mycoplasma genitalium (strain ATCC 33530 / DSM 19775 / NCTC 10195 / G37) (Mycoplasmoides genitalium).